A 482-amino-acid polypeptide reads, in one-letter code: ATP synthase subunit beta, chloroplastic (482 aa).

Residue 162–169 (GGAGVGKT) participates in ATP binding.

Belongs to the ATPase alpha/beta chains family. F-type ATPases have 2 components, CF(1) - the catalytic core - and CF(0) - the membrane proton channel. CF(1) has five subunits: alpha(3), beta(3), gamma(1), delta(1), epsilon(1). CF(0) has four main subunits: a(1), b(1), b'(1) and c(9-12).

The protein resides in the plastid. The protein localises to the chloroplast thylakoid membrane. It catalyses the reaction ATP + H2O + 4 H(+)(in) = ADP + phosphate + 5 H(+)(out). Functionally, produces ATP from ADP in the presence of a proton gradient across the membrane. The catalytic sites are hosted primarily by the beta subunits. The sequence is that of ATP synthase subunit beta, chloroplastic from Pleurastrum terricola (Filamentous green alga).